The following is a 205-amino-acid chain: Ribonuclease HII (205 aa).

Residues 15-205 form the RNase H type-2 domain; the sequence is SRVCGIDEAG…SFKLRKLGEK (191 aa). Asp21, Glu22, and Asp117 together coordinate a divalent metal cation.

Belongs to the RNase HII family. The cofactor is Mn(2+). Requires Mg(2+) as cofactor.

Its subcellular location is the cytoplasm. The catalysed reaction is Endonucleolytic cleavage to 5'-phosphomonoester.. Endonuclease that specifically degrades the RNA of RNA-DNA hybrids. This is Ribonuclease HII from Chlorobaculum parvum (strain DSM 263 / NCIMB 8327) (Chlorobium vibrioforme subsp. thiosulfatophilum).